A 1404-amino-acid chain; its full sequence is DNA-directed RNA polymerase subunit beta' (1404 aa).

Cys60, Cys62, Cys75, and Cys78 together coordinate Zn(2+). Residues Asp449, Asp451, and Asp453 each contribute to the Mg(2+) site. The Zn(2+) site is built by Cys778, Cys852, Cys859, and Cys862. Residues Asp1381–Glu1404 form a disordered region. A compositionally biased stretch (acidic residues) spans Leu1384 to Glu1404.

This sequence belongs to the RNA polymerase beta' chain family. As to quaternary structure, the RNAP catalytic core consists of 2 alpha, 1 beta, 1 beta' and 1 omega subunit. When a sigma factor is associated with the core the holoenzyme is formed, which can initiate transcription. Mg(2+) serves as cofactor. Zn(2+) is required as a cofactor.

The enzyme catalyses RNA(n) + a ribonucleoside 5'-triphosphate = RNA(n+1) + diphosphate. Its function is as follows. DNA-dependent RNA polymerase catalyzes the transcription of DNA into RNA using the four ribonucleoside triphosphates as substrates. The polypeptide is DNA-directed RNA polymerase subunit beta' (Leptospira borgpetersenii serovar Hardjo-bovis (strain JB197)).